The sequence spans 171 residues: 3-hydroxyanthranilate 3,4-dioxygenase (171 aa).

R44 lines the O2 pocket. The Fe cation site is built by H48, E54, and H92. E54 lines the substrate pocket. Substrate contacts are provided by R96 and E106. A divalent metal cation is bound by residues C121, C126, C160, and C163.

This sequence belongs to the 3-HAO family. It depends on Fe(2+) as a cofactor.

It localises to the cytoplasm. It carries out the reaction 3-hydroxyanthranilate + O2 = (2Z,4Z)-2-amino-3-carboxymuconate 6-semialdehyde. Its pathway is cofactor biosynthesis; NAD(+) biosynthesis; quinolinate from L-kynurenine: step 3/3. Its function is as follows. Catalyzes the oxidative ring opening of 3-hydroxyanthranilate to 2-amino-3-carboxymuconate semialdehyde, which spontaneously cyclizes to quinolinate. The chain is 3-hydroxyanthranilate 3,4-dioxygenase from Yarrowia lipolytica (strain CLIB 122 / E 150) (Yeast).